We begin with the raw amino-acid sequence, 884 residues long: Peroxidase-like protein 2 (884 aa).

Disordered stretches follow at residues 1-53, 78-188, 204-279, 653-695, 710-744, and 828-884; these read TTSC…RTKG, VHSK…SQGA, EKET…DDDD, PEIP…SATQ, DLQP…GAVG, and VGGM…SDTK. Residues 17–29 are compositionally biased toward polar residues; it reads GTCNNVNKPTVGS. Over residues 32 to 53 the composition is skewed to basic and acidic residues; the sequence is DKFKRDVKPQYDDKKGDPRTKG. The segment covering 91-118 has biased composition (low complexity); sequence KSSAVSPKMPSMGNLQSLGNLLSLGSVP. The segment covering 119–129 has biased composition (pro residues); that stretch reads VPAPAPAPEPV. Composition is skewed to basic residues over residues 160–172 and 230–245; these read PKSK…KPKP and RTPK…QSIF. Basic and acidic residues predominate over residues 246 to 267; it reads RRRDDRKDDRKGLRGTKGRRDD. Acidic residues predominate over residues 268–279; that stretch reads SDDNDDSDDDDD. Gly residues predominate over residues 828–856; sequence VGGMGGSVGVGGSVGSGGSGGSRGAGGSG. The span at 865-884 shows a compositional bias: basic and acidic residues; sequence DDSKCSDDEKQKYCKNSDTK.

Belongs to the peroxidase family. Component of the acid-insoluble and acid-soluble organic matrix of calcified layers of the shell (at protein level).

Its subcellular location is the secreted. The sequence is that of Peroxidase-like protein 2 from Lottia gigantea (Giant owl limpet).